A 122-amino-acid chain; its full sequence is Large ribosomal subunit protein uL14c (122 aa).

Belongs to the universal ribosomal protein uL14 family. As to quaternary structure, part of the 50S ribosomal subunit.

The protein resides in the plastid. It is found in the chloroplast. In terms of biological role, binds to 23S rRNA. In Cryptomeria japonica (Japanese cedar), this protein is Large ribosomal subunit protein uL14c.